The chain runs to 89 residues: Large ribosomal subunit protein eL34 (89 aa).

The tract at residues 1-22 (MPAPRYKSGSSKKVYRKAPGNS) is disordered.

This sequence belongs to the eukaryotic ribosomal protein eL34 family.

The sequence is that of Large ribosomal subunit protein eL34 from Methanococcus maripaludis (strain DSM 14266 / JCM 13030 / NBRC 101832 / S2 / LL).